Here is a 368-residue protein sequence, read N- to C-terminus: Cytoskeleton protein RodZ (368 aa).

At 1-111 the chain is on the cytoplasmic side; it reads MNTEASQDQT…LGKKHKKRDG (111 aa). The region spanning 19 to 79 is the HTH cro/C1-type domain; it reads LRQARESLGL…KLVHLPEDEL (61 aa). The H-T-H motif DNA-binding region spans 30–49; the sequence is QQTVAERLCLKVSTIRDIEE. A helical; Signal-anchor for type II membrane protein transmembrane segment spans residues 112 to 132; it reads WLMSFTWLIVLVVLGLTGAWW. At 133-368 the chain is on the periplasmic side; sequence WQNHQAQQAE…RVARLTVGVE (236 aa). The segment at 151–243 is disordered; the sequence is SAQLSQNGGQ…STEPVDTANT (93 aa). Residues 193–221 are compositionally biased toward low complexity; sequence STSAVTNSATTSSATTSSVPTTSSVPKTT. The span at 229 to 243 shows a compositional bias: polar residues; that stretch reads VPKTNSTEPVDTANT.

It belongs to the RodZ family.

The protein resides in the cell inner membrane. Functionally, cytoskeletal protein that is involved in cell-shape control through regulation of the length of the long axis. This Yersinia pseudotuberculosis serotype O:3 (strain YPIII) protein is Cytoskeleton protein RodZ.